A 306-amino-acid chain; its full sequence is Curved DNA-binding protein (306 aa).

One can recognise a J domain in the interval 5 to 69 (DYYAIMGVKP…QRRAEYDQMW (65 aa)).

The protein resides in the cytoplasm. Its subcellular location is the nucleoid. In terms of biological role, DNA-binding protein that preferentially recognizes a curved DNA sequence. It is probably a functional analog of DnaJ; displays overlapping activities with DnaJ, but functions under different conditions, probably acting as a molecular chaperone in an adaptive response to environmental stresses other than heat shock. Lacks autonomous chaperone activity; binds native substrates and targets them for recognition by DnaK. Its activity is inhibited by the binding of CbpM. This is Curved DNA-binding protein from Escherichia coli (strain K12 / MC4100 / BW2952).